The sequence spans 569 residues: Endonuclease/exonuclease/phosphatase family domain-containing protein 1 (569 aa).

G2 is lipidated: N-myristoyl glycine. Phosphoserine is present on residues S16 and S25. Positions 38 to 67 constitute a HhH domain; the sequence is ERLNINTATEEELMTLPGVTRAVARSIVEY. 4 positions are modified to phosphoserine: S106, S110, S160, and S173. The disordered stretch occupies residues 200–224; the sequence is SRPPSTHTNGGLTFTAKPHPSPTSL. The segment covering 202 to 211 has biased composition (polar residues); the sequence is PPSTHTNGGL. T265 is modified (phosphothreonine). The tract at residues 549–569 is disordered; it reads VPRNGNGVTLEPSEANIKHER.

This is Endonuclease/exonuclease/phosphatase family domain-containing protein 1 (Eepd1) from Mus musculus (Mouse).